The chain runs to 517 residues: DNA-binding protein Ikaros (517 aa).

The segment at 1–71 is disordered; it reads MDVDEGQDMS…QSDEENGRAC (71 aa). Ser13 carries the phosphoserine modification. Thr23 is subject to Phosphothreonine. Residues 37-47 show a composition bias toward polar residues; it reads LSTTSGAQQNS. Residue Lys58 forms a Glycyl lysine isopeptide (Lys-Gly) (interchain with G-Cter in SUMO) linkage. Residues Ser63 and Ser101 each carry the phosphoserine modification. Residues 117-139 form a C2H2-type 1 zinc finger; sequence LKCDICGIVCIGPNVLMVHKRSH. At Thr140 the chain carries Phosphothreonine. The segment at 144 to 166 adopts a C2H2-type 2 zinc-finger fold; that stretch reads FQCNQCGASFTQKGNLLRHIKLH. Positions 153 to 162 are required for both high-affinity DNA binding and pericentromeric heterochromatin localization; the sequence is FTQKGNLLRH. Residue Ser167 is modified to Phosphoserine. A C2H2-type 3 zinc finger spans residues 172 to 194; sequence FKCHLCNYACRRRDALTGHLRTH. The segment at 179 to 194 is required for both high-affinity DNA binding and pericentromeric heterochromatin localization; sequence YACRRRDALTGHLRTH. Ser195 is subject to Phosphoserine. Residues 200–223 form a C2H2-type 4 zinc finger; sequence HKCGYCGRSYKQRSSLEEHKERCH. Residue Lys239 forms a Glycyl lysine isopeptide (Lys-Gly) (interchain with G-Cter in SUMO) linkage. Ser259, Ser287, Ser293, Ser357, Ser360, Ser384, Ser386, Ser388, and Ser392 each carry phosphoserine. The segment at 376–400 is disordered; that stretch reads SVSSEREASPSNSCQDSTDTESNAE. Phosphothreonine is present on Thr393. 2 positions are modified to phosphoserine: Ser397 and Ser440. C2H2-type zinc fingers lie at residues 457-479 and 488-512; these read YKCE…MGCH and FECN…RGEH. The interval 463–466 is required for binding PP1CC; that stretch reads RVLF.

The protein belongs to the Ikaros C2H2-type zinc-finger protein family. Heterodimer with other IKAROS family members. Interacts with IKZF4 and IKZF5. Component of the chromatin-remodeling NuRD repressor complex which includes at least HDAC1, HDAC2, RBBP4, RBBP7, IKZF1, MTA2, MBD2, MBD3, MTA1L1, CHD3 and CHD4. Interacts directly with the CHD4 component of the NuRD complex. Interacts directly with SMARCA4; the interaction associates IKFZ1 with the BAF complex. Interacts with SUMO1; the interaction sumoylates IKAROS, promoted by PIAS2 and PIAS3. Interacts with PIAS2 (isoform alpha); the interaction promotes sumoylation and reduces transcription repression. Interacts, to a lesser extent, with PIAS3. Interacts with PPP1CC; the interaction targets PPP1CC to pericentromeric heterochromatin, dephosphorylates IKAROS, stabilizes it and prevents it from degradation. Interacts with IKZF3. Post-translationally, phosphorylation at Ser-357 and Ser-360 downstream of SYK induces nuclear translocation. Phosphorylation controls cell-cycle progression from late G(1) stage to S stage. Hyperphosphorylated during G2/M phase. Dephosphorylated state during late G(1) phase. Phosphorylation on Thr-140 is required for DNA and pericentromeric location during mitosis. CK2 is the main kinase, in vitro. GSK3 and CDK may also contribute to phosphorylation of the C-terminal serine and threonine residues. Phosphorylation on these C-terminal residues reduces the DNA-binding ability. Phosphorylation/dephosphorylation events on Ser-13 and Ser-293 regulate TDT expression during thymocyte differentiation. Dephosphorylation by protein phosphatase 1 regulates stability and pericentromeric heterochromatin location. Phosphorylated in both lymphoid and non-lymphoid tissues. In terms of processing, sumoylated. Simultaneous sumoylation on the 2 sites results in a loss of both HDAC-dependent and HDAC-independent repression. Has no effect on pericentromeric heterochromatin location. Desumoylated by SENP1. Polyubiquitinated. Strongly expressed in T-cells and their progenitors,in B-cells, and in all early embryonic retinal progenitor cells (RPCs). Isoforms V and VI are the predominant isoforms in lymphocytes.

It localises to the nucleus. It is found in the cytoplasm. Its function is as follows. Transcription regulator of hematopoietic cell differentiation. Binds gamma-satellite DNA. Binds with higher affinity to gamma satellite A. Plays a role in the development of lymphocytes, B- and T-cells. Binds and activates the enhancer (delta-A element) of the CD3-delta gene. Repressor of the TDT (terminal deoxynucleotidyltransferase) gene during thymocyte differentiation. Regulates transcription through association with both HDAC-dependent and HDAC-independent complexes. Targets the 2 chromatin-remodeling complexes, NuRD and BAF (SWI/SNF), in a single complex (PYR complex), to the beta-globin locus in adult erythrocytes. Increases normal apoptosis in adult erythroid cells. Confers early temporal competence to retinal progenitor cells (RPCs). Function is isoform-specific and is modulated by dominant-negative inactive isoforms. The polypeptide is DNA-binding protein Ikaros (Ikzf1) (Mus musculus (Mouse)).